The primary structure comprises 403 residues: 26S proteasome regulatory subunit 8 (403 aa).

186–193 (GPPGTGKT) is an ATP binding site.

Belongs to the AAA ATPase family.

It is found in the cytoplasm. The protein localises to the nucleus. Its function is as follows. The 26S proteasome is involved in the ATP-dependent degradation of ubiquitinated proteins. The regulatory (or ATPase) complex confers ATP dependency and substrate specificity to the 26S complex. This is 26S proteasome regulatory subunit 8 (psmC5) from Dictyostelium discoideum (Social amoeba).